We begin with the raw amino-acid sequence, 481 residues long: ATP synthase subunit beta, chloroplastic (481 aa).

161 to 168 (GGAGVGKT) is an ATP binding site.

Belongs to the ATPase alpha/beta chains family. In terms of assembly, F-type ATPases have 2 components, CF(1) - the catalytic core - and CF(0) - the membrane proton channel. CF(1) has five subunits: alpha(3), beta(3), gamma(1), delta(1), epsilon(1). CF(0) has four main subunits: a(1), b(1), b'(1) and c(9-12).

It is found in the plastid. The protein resides in the chloroplast thylakoid membrane. It catalyses the reaction ATP + H2O + 4 H(+)(in) = ADP + phosphate + 5 H(+)(out). Produces ATP from ADP in the presence of a proton gradient across the membrane. The catalytic sites are hosted primarily by the beta subunits. This chain is ATP synthase subunit beta, chloroplastic, found in Mesostigma viride (Green alga).